Reading from the N-terminus, the 55-residue chain is ATP synthase protein 8 (55 aa).

A helical membrane pass occupies residues 4–24 (LDPAPWFSMLTVSWLIIFLLI).

It belongs to the ATPase protein 8 family. In terms of assembly, F-type ATPases have 2 components, CF(1) - the catalytic core - and CF(0) - the membrane proton channel.

Its subcellular location is the mitochondrion membrane. Functionally, mitochondrial membrane ATP synthase (F(1)F(0) ATP synthase or Complex V) produces ATP from ADP in the presence of a proton gradient across the membrane which is generated by electron transport complexes of the respiratory chain. F-type ATPases consist of two structural domains, F(1) - containing the extramembraneous catalytic core and F(0) - containing the membrane proton channel, linked together by a central stalk and a peripheral stalk. During catalysis, ATP synthesis in the catalytic domain of F(1) is coupled via a rotary mechanism of the central stalk subunits to proton translocation. Part of the complex F(0) domain. Minor subunit located with subunit a in the membrane. This Petromyzon marinus (Sea lamprey) protein is ATP synthase protein 8 (MT-ATP8).